Consider the following 1382-residue polypeptide: Hepatocyte growth factor receptor (1382 aa).

The first 24 residues, 1-24 (MKAPAVLAPGILVLLFTLVQKSYG), serve as a signal peptide directing secretion. Over 25-935 (ECKEALVKSE…VQPDQNFTGL (911 aa)) the chain is Extracellular. In terms of domain architecture, Sema spans 27–516 (KEALVKSEMN…TGKKITRIPL (490 aa)). N-linked (GlcNAc...) asparagine glycosylation occurs at Asn-45. 4 disulfides stabilise this stretch: Cys-95-Cys-101, Cys-98-Cys-160, Cys-133-Cys-141, and Cys-173-Cys-176. Asn-106 is a glycosylation site (N-linked (GlcNAc...) asparagine). N-linked (GlcNAc...) asparagine glycans are attached at residues Asn-203 and Asn-359. 2 disulfide bridges follow: Cys-299–Cys-364 and Cys-386–Cys-398. N-linked (GlcNAc...) asparagine glycans are attached at residues Asn-400 and Asn-406. Disulfide bonds link Cys-521/Cys-539, Cys-527/Cys-562, Cys-530/Cys-546, and Cys-542/Cys-552. 3 consecutive IPT/TIG domains span residues 564 to 656 (PAIY…FSYV), 658 to 740 (PIIT…FSYQ), and 743 to 837 (PIVY…LIYV). The O-linked (Man) threonine glycan is linked to Thr-583. 2 N-linked (GlcNAc...) asparagine glycosylation sites follow: Asn-608 and Asn-636. Thr-677 and Thr-762 each carry an O-linked (Man) threonine glycan. Residues Asn-786, Asn-880, and Asn-931 are each glycosylated (N-linked (GlcNAc...) asparagine). The chain crosses the membrane as a helical span at residues 936 to 956 (IAGVISISTIVLLLLGLFLWL). The Cytoplasmic portion of the chain corresponds to 957–1379 (KRKKQIKDLG…LSSQDNIDGE (423 aa)). Ser-967 is subject to Phosphoserine. Thr-978 carries the phosphothreonine modification. A phosphoserine mark is found at Ser-991, Ser-998, and Ser-1001. Residue Tyr-1004 is modified to Phosphotyrosine. Positions 1079–1346 (VHFNEVIGRG…RISAIFSTFI (268 aa)) constitute a Protein kinase domain. Residues 1085–1093 (IGRGHFGCV) and Lys-1111 contribute to the ATP site. Asp-1205 acts as the Proton acceptor in catalysis. Positions 1213-1382 (LDEKFTVKVA…QDNIDGEGDT (170 aa)) are interaction with RANBP9. Tyr-1231 carries the phosphotyrosine modification. Phosphotyrosine; by autocatalysis is present on residues Tyr-1235 and Tyr-1236. Thr-1290 carries the post-translational modification Phosphothreonine. An interaction with MUC20 region spans residues 1321-1360 (WHPRAELRPSFSELVSRISAIFSTFIGEHYVHVNATYVNV). Tyr-1350 and Tyr-1357 each carry phosphotyrosine; by autocatalysis. Tyr-1366 is modified (phosphotyrosine).

It belongs to the protein kinase superfamily. Tyr protein kinase family. In terms of assembly, heterodimer made of an alpha chain (50 kDa) and a beta chain (145 kDa) which are disulfide linked. Binds PLXNB1. Interacts when phosphorylated with downstream effectors including STAT3, PIK3R1, SRC, PCLG1, GRB2 and GAB1. Interacts with SPSB1, SPSB2 and SPSB4. Interacts with INPP5D/SHIP1. When phosphorylated at Tyr-1357, interacts with INPPL1/SHIP2. Interacts with RANBP9 and RANBP10, as well as SPSB1, SPSB2, SPSB3 and SPSB4. SPSB1 binding occurs in the presence and in the absence of HGF, however HGF treatment has a positive effect on this interaction. Interacts with MUC20; prevents interaction with GRB2 and suppresses hepatocyte growth factor-induced cell proliferation. Interacts with GRB10. Interacts with PTPN1 and PTPN2. Interacts with HSP90AA1 and HSP90AB1; the interaction suppresses MET kinase activity. Interacts with tensin TNS3. Interacts (when phosphorylated) with tensin TNS4 (via SH2 domain); the interaction increases MET protein stability by inhibiting MET endocytosis and subsequent lysosomal degradation. (Microbial infection) Interacts with L.monocytogenes InlB. InlB probably dimerizes upon binding to MET, which encourages subsequent dimerization of MET. Autophosphorylated in response to ligand binding on Tyr-1235 and Tyr-1236 in the kinase domain leading to further phosphorylation of Tyr-1350 and Tyr-1357 in the C-terminal multifunctional docking site. Dephosphorylated by PTPRJ at Tyr-1350 and Tyr-1366. Dephosphorylated by PTPN1 and PTPN2. Post-translationally, ubiquitinated. Ubiquitination by CBL regulates the receptor stability and activity through proteasomal degradation. In terms of processing, (Microbial infection) Tyrosine phosphorylation is stimulated by L.monocytogenes InlB. O-mannosylation of IPT/TIG domains by TMEM260 is required for protein maturation. O-mannosylated residues are composed of single mannose glycans that are not elongated or modified.

The protein localises to the membrane. The catalysed reaction is L-tyrosyl-[protein] + ATP = O-phospho-L-tyrosyl-[protein] + ADP + H(+). Its activity is regulated as follows. In its inactive state, the C-terminal tail interacts with the catalytic domain and inhibits the kinase activity. Upon ligand binding, the C-terminal tail is displaced and becomes phosphorylated, thus increasing the kinase activity. Functionally, receptor tyrosine kinase that transduces signals from the extracellular matrix into the cytoplasm by binding to hepatocyte growth factor/HGF ligand. Regulates many physiological processes including proliferation, scattering, morphogenesis and survival. Ligand binding at the cell surface induces autophosphorylation of MET on its intracellular domain that provides docking sites for downstream signaling molecules. Following activation by ligand, interacts with the PI3-kinase subunit PIK3R1, PLCG1, SRC, GRB2, STAT3 or the adapter GAB1. Recruitment of these downstream effectors by MET leads to the activation of several signaling cascades including the RAS-ERK, PI3 kinase-AKT, or PLCgamma-PKC. The RAS-ERK activation is associated with the morphogenetic effects while PI3K/AKT coordinates prosurvival effects. During embryonic development, MET signaling plays a role in gastrulation, development and migration of muscles and neuronal precursors, angiogenesis and kidney formation. In adults, participates in wound healing as well as organ regeneration and tissue remodeling. Also promotes differentiation and proliferation of hematopoietic cells. (Microbial infection) Acts as a receptor for Listeria monocytogenes internalin InlB, mediating entry of the pathogen into cells. The chain is Hepatocyte growth factor receptor (MET) from Canis lupus familiaris (Dog).